The chain runs to 195 residues: Transcriptional regulator LdrP (195 aa).

In terms of domain architecture, HTH crp-type spans Gly-110 to Ala-182. A DNA-binding region (H-T-H motif) is located at residues His-142–Ala-161.

In terms of biological role, activates transcription. Positively regulates PcrtB promoter upstream of the crtB operon in a cAMP-independent manner. Regulated genes include genes encoding DNA photolyase, phytoene synthase and cytochrome P450 monooxygenase, which are involved in carotenoid biosynthesis. Positively regulates the light-inducible gene cluster in the megaplasmid in a cAMP-independent manner. In Thermus thermophilus (strain ATCC BAA-163 / DSM 7039 / HB27), this protein is Transcriptional regulator LdrP.